Consider the following 198-residue polypeptide: Putative peptidyl-prolyl cis-trans isomerase (198 aa).

The region spanning 14-195 is the PPIase cyclophilin-type domain; that stretch reads NEIKVAMHTN…HDVVIESIDV (182 aa).

The protein belongs to the cyclophilin-type PPIase family.

It carries out the reaction [protein]-peptidylproline (omega=180) = [protein]-peptidylproline (omega=0). PPIases accelerate the folding of proteins. It catalyzes the cis-trans isomerization of proline imidic peptide bonds in oligopeptides. This is Putative peptidyl-prolyl cis-trans isomerase from Staphylococcus haemolyticus (strain JCSC1435).